The sequence spans 336 residues: CMP-sialic acid transporter (336 aa).

The Cytoplasmic portion of the chain corresponds to 1 to 9 (MAQARENVS). Residues 10–30 (LFFKLYCLAVMTLVAAAYTVA) form a helical membrane-spanning segment. Over 31-45 (LRYTRTTAKELYFST) the chain is Lumenal. Residues 46–64 (TAVCVTEVIKLLISVGLLA) traverse the membrane as a helical segment. Residue Lys55 participates in CMP-N-acetyl-beta-neuraminate binding. Topologically, residues 65-87 (KETGSLGRFKASLSENVLGSPKE) are cytoplasmic. A helical membrane pass occupies residues 88 to 108 (LMKLSVPSLVYAVQNNMAFLA). 101–102 (QN) lines the CMP-N-acetyl-beta-neuraminate pocket. Over 109–114 (LSNLDA) the chain is Lumenal. The helical transmembrane segment at 115–135 (AVYQVTYQLKIPCTALCTVLM) threads the bilayer. 117-124 (YQVTYQLK) is a CMP-N-acetyl-beta-neuraminate binding site. Residues 136–141 (LNRTLS) lie on the Cytoplasmic side of the membrane. A helical membrane pass occupies residues 142-160 (KLQWVSVFMLCGGVILVQW). At 161–175 (KPAQATKVVVEQSPL) the chain is on the lumenal side. Residues 176–196 (LGFGAIAIAVLCSGFAGVYFE) traverse the membrane as a helical segment. Ser188 is a binding site for CMP-N-acetyl-beta-neuraminate. The Cytoplasmic segment spans residues 197–209 (KVLKSSDTSLWVR). Residue 210–214 (NIQMY) participates in CMP-N-acetyl-beta-neuraminate binding. A helical membrane pass occupies residues 210–228 (NIQMYLSGIVVTLVGTYLS). Topologically, residues 229–243 (DGAEIKEKGFFYGYT) are lumenal. The helical transmembrane segment at 244-262 (YYVWFVIFLASVGGLYTSV) threads the bilayer. Over 263-269 (VVKYTDN) the chain is Cytoplasmic. The chain crosses the membrane as a helical span at residues 270-288 (IMKGFSAAAAIVLSTIASV). Lys272 is a CMP-N-acetyl-beta-neuraminate binding site. Over 289 to 296 (MLFGLQIT) the chain is Lumenal. Residues 297–315 (LSFAMGALLVCISIYLYGL) form a helical membrane-spanning segment. The Cytoplasmic segment spans residues 316-336 (PRQDTTCIQQEATSKERVIGV). Residues 316–336 (PRQDTTCIQQEATSKERVIGV) form a disordered region.

It belongs to the nucleotide-sugar transporter family. SLC35A subfamily. In terms of assembly, monomer.

It localises to the golgi apparatus membrane. The enzyme catalyses CMP-N-acetyl-beta-neuraminate(in) + CMP(out) = CMP-N-acetyl-beta-neuraminate(out) + CMP(in). It carries out the reaction CMP-N-acetyl-beta-neuraminate(in) + AMP(out) = CMP-N-acetyl-beta-neuraminate(out) + AMP(in). It catalyses the reaction CDP-L-ribitol(in) + CDP(out) = CDP-L-ribitol(out) + CDP(in). The catalysed reaction is UMP(out) + CMP-N-acetyl-beta-neuraminate(in) = UMP(in) + CMP-N-acetyl-beta-neuraminate(out). Transports CMP-sialic acid from the cytosol into the Golgi apparatus, functioning as an antiporter that exchanges CMP-sialic acid for CMP. Binds both CMP-sialic acid and free CMP, but has higher affinity for free CMP. Also able to exchange CMP-sialic acid for AMP and UMP. Also mediates the transport of CDP-ribitol. The chain is CMP-sialic acid transporter (SLC35A1) from Cricetulus griseus (Chinese hamster).